The primary structure comprises 169 residues: Photosystem I assembly protein Ycf3 (169 aa).

3 TPR repeats span residues 35-68 (AFTYYRDGMSAQSEGEYAEALLNYYEAMRLEIDP), 72-105 (SYILYNIGLIHTSNGEHVKALEYYFQALERNPSL), and 120-153 (GEQAIEQGDSENSEIWFDQAASYWKQAIALAPNN).

The protein belongs to the Ycf3 family.

It localises to the plastid. Its subcellular location is the chloroplast thylakoid membrane. Its function is as follows. Essential for the assembly of the photosystem I (PSI) complex. May act as a chaperone-like factor to guide the assembly of the PSI subunits. The polypeptide is Photosystem I assembly protein Ycf3 (Staurastrum punctulatum (Green alga)).